The primary structure comprises 359 residues: Peptide methionine sulfoxide reductase MsrA/MsrB (359 aa).

The segment at 36 to 189 (RVIYLAGGCF…PSGYCHIDLK (154 aa)) is peptide methionine sulfoxide reductase A. Residue Cys-44 is part of the active site. One can recognise a MsrB domain in the interval 206-329 (DEVLKKKLTK…NSAALRFIPL (124 aa)). The active-site Nucleophile is Cys-318.

In the N-terminal section; belongs to the MsrA Met sulfoxide reductase family. This sequence in the C-terminal section; belongs to the MsrB Met sulfoxide reductase family.

It carries out the reaction L-methionyl-[protein] + [thioredoxin]-disulfide + H2O = L-methionyl-(S)-S-oxide-[protein] + [thioredoxin]-dithiol. The enzyme catalyses [thioredoxin]-disulfide + L-methionine + H2O = L-methionine (S)-S-oxide + [thioredoxin]-dithiol. It catalyses the reaction L-methionyl-[protein] + [thioredoxin]-disulfide + H2O = L-methionyl-(R)-S-oxide-[protein] + [thioredoxin]-dithiol. Its function is as follows. Has an important function as a repair enzyme for proteins that have been inactivated by oxidation. Catalyzes the reversible oxidation-reduction of methionine sulfoxide in proteins to methionine. This is Peptide methionine sulfoxide reductase MsrA/MsrB (msrAB) from Helicobacter pylori (strain ATCC 700392 / 26695) (Campylobacter pylori).